Here is a 215-residue protein sequence, read N- to C-terminus: Adenylate kinase (215 aa).

Position 10–15 (G10–T15) interacts with ATP. The segment at S30–V59 is NMP. AMP is bound by residues T31, R36, G57–V59, G85–R88, and Q92. Positions G122–D159 are LID. ATP is bound by residues R123 and V132–Y133. The AMP site is built by R156 and R167. G201 contributes to the ATP binding site.

This sequence belongs to the adenylate kinase family. In terms of assembly, monomer.

Its subcellular location is the cytoplasm. It catalyses the reaction AMP + ATP = 2 ADP. The protein operates within purine metabolism; AMP biosynthesis via salvage pathway; AMP from ADP: step 1/1. Its function is as follows. Catalyzes the reversible transfer of the terminal phosphate group between ATP and AMP. Plays an important role in cellular energy homeostasis and in adenine nucleotide metabolism. The polypeptide is Adenylate kinase (Pseudomonas fluorescens (strain ATCC BAA-477 / NRRL B-23932 / Pf-5)).